Here is a 429-residue protein sequence, read N- to C-terminus: Serine hydroxymethyltransferase (429 aa).

(6S)-5,6,7,8-tetrahydrofolate contacts are provided by residues L126 and 130 to 132 (GHL). The residue at position 235 (K235) is an N6-(pyridoxal phosphate)lysine. 359–361 (SPF) serves as a coordination point for (6S)-5,6,7,8-tetrahydrofolate.

Belongs to the SHMT family. In terms of assembly, homodimer. Pyridoxal 5'-phosphate serves as cofactor.

The protein localises to the cytoplasm. It carries out the reaction (6R)-5,10-methylene-5,6,7,8-tetrahydrofolate + glycine + H2O = (6S)-5,6,7,8-tetrahydrofolate + L-serine. It participates in one-carbon metabolism; tetrahydrofolate interconversion. Its pathway is amino-acid biosynthesis; glycine biosynthesis; glycine from L-serine: step 1/1. Its function is as follows. Catalyzes the reversible interconversion of serine and glycine with tetrahydrofolate (THF) serving as the one-carbon carrier. This reaction serves as the major source of one-carbon groups required for the biosynthesis of purines, thymidylate, methionine, and other important biomolecules. Also exhibits THF-independent aldolase activity toward beta-hydroxyamino acids, producing glycine and aldehydes, via a retro-aldol mechanism. This Prochlorococcus marinus (strain MIT 9313) protein is Serine hydroxymethyltransferase.